The following is a 100-amino-acid chain: Large ribosomal subunit protein uL23 (100 aa).

The protein belongs to the universal ribosomal protein uL23 family. As to quaternary structure, part of the 50S ribosomal subunit. Contacts protein L29, and trigger factor when it is bound to the ribosome.

One of the early assembly proteins it binds 23S rRNA. One of the proteins that surrounds the polypeptide exit tunnel on the outside of the ribosome. Forms the main docking site for trigger factor binding to the ribosome. In Xylella fastidiosa (strain 9a5c), this protein is Large ribosomal subunit protein uL23.